Here is a 161-residue protein sequence, read N- to C-terminus: MNARRKKRLALATALIGGVAAIASLLLYALNSNLNLFYTPTEIVHGKKDTGVKPEIGQRIRVGGMVTVGSLVRDPESLHVEFAVHDAAGGEVMVTYDDLLPDLFREGQGIVAQGVLIEGGKLEATEVLAKHDENYMPPEVAEAMGQTHEKLEYDSTQKTGY.

Residues 1–8 lie on the Cytoplasmic side of the membrane; it reads MNARRKKR. A helical; Signal-anchor for type II membrane protein membrane pass occupies residues 9 to 29; it reads LALATALIGGVAAIASLLLYA. Over 30–161 the chain is Periplasmic; the sequence is LNSNLNLFYT…EYDSTQKTGY (132 aa). Heme-binding residues include His-131 and Tyr-135.

The protein belongs to the CcmE/CycJ family.

Its subcellular location is the cell inner membrane. In terms of biological role, heme chaperone required for the biogenesis of c-type cytochromes. Transiently binds heme delivered by CcmC and transfers the heme to apo-cytochromes in a process facilitated by CcmF and CcmH. This is Cytochrome c-type biogenesis protein CcmE from Shewanella loihica (strain ATCC BAA-1088 / PV-4).